The chain runs to 97 residues: Large ribosomal subunit protein bL28 (97 aa).

This sequence belongs to the bacterial ribosomal protein bL28 family.

The chain is Large ribosomal subunit protein bL28 from Rickettsia typhi (strain ATCC VR-144 / Wilmington).